The primary structure comprises 548 residues: Glucose-6-phosphate isomerase (548 aa).

E355 functions as the Proton donor in the catalytic mechanism. Catalysis depends on residues H386 and K514.

It belongs to the GPI family.

The protein resides in the cytoplasm. The catalysed reaction is alpha-D-glucose 6-phosphate = beta-D-fructose 6-phosphate. Its pathway is carbohydrate biosynthesis; gluconeogenesis. It functions in the pathway carbohydrate degradation; glycolysis; D-glyceraldehyde 3-phosphate and glycerone phosphate from D-glucose: step 2/4. Its function is as follows. Catalyzes the reversible isomerization of glucose-6-phosphate to fructose-6-phosphate. The protein is Glucose-6-phosphate isomerase of Hamiltonella defensa subsp. Acyrthosiphon pisum (strain 5AT).